The chain runs to 320 residues: MMIKTRFSRWLTFFTFAAAVALALPAKANTWPLPPAGSRLVGENKFHVVENDGGSLEAIAKKYNVGFLALLQANPGVDPYVPRAGSVLTIPLQTLLPDAPREGIVINIAELRLYYYPPGKNSVTVYPIGIGQLGGDTLTPTMVTTVSDKRANPTWTPTANIRARYKAQGIELPAVVPAGLDNPMGHHAIRLAAYGGVYLLHGTNADFGIGMRVSSGCIRLRDDDIKTLFSQVTPGTKVNIINTPIKVSAEPNGARLVEVHQPLSEKIDDDPQLLPITLNSAMQSFKDAAQTDAEVMQHVMDVRSGMPVDVRRHQVSPQTL.

An N-terminal signal peptide occupies residues 1-23; that stretch reads MMIKTRFSRWLTFFTFAAAVALA. The LysM domain occupies 45–90; the sequence is KFHVVENDGGSLEAIAKKYNVGFLALLQANPGVDPYVPRAGSVLTI. Residues 102-241 form the L,D-TPase catalytic domain; sequence EGIVINIAEL…VTPGTKVNII (140 aa). The Proton donor/acceptor role is filled by H201. Catalysis depends on C217, which acts as the Nucleophile.

Belongs to the YkuD family. In terms of assembly, interacts with DsbG.

The protein resides in the periplasm. It functions in the pathway cell wall biogenesis; peptidoglycan biosynthesis. In terms of biological role, responsible, at least in part, for anchoring of the major outer membrane lipoprotein (Lpp, also known as the Braun lipoprotein) to the peptidoglycan via a meso-diaminopimelyl-L-Lys- bond on the terminal residue of Lpp. This is Probable L,D-transpeptidase YcfS (ycfS) from Escherichia coli (strain K12).